Here is a 218-residue protein sequence, read N- to C-terminus: uncharacterized protein (218 aa).

A run of 5 helical transmembrane segments spans residues 27 to 49 (IALENAGIPIPGETITLLGGFLA), 57 to 77 (GGVLIAAIAGAVLGDSCGYWV), 115 to 135 (VFFGRFVTLLRIFAGPMAGIV), 142 to 162 (FLLYNIGGASVWAAITVSLAY), and 180 to 200 (FSWFALAAVVGMVGIYFVFHF).

Belongs to the DedA family.

The protein localises to the cell membrane. This is an uncharacterized protein from Synechocystis sp. (strain ATCC 27184 / PCC 6803 / Kazusa).